Here is a 429-residue protein sequence, read N- to C-terminus: UPF0597 protein BT_2080 (429 aa).

The protein belongs to the UPF0597 family.

The sequence is that of UPF0597 protein BT_2080 from Bacteroides thetaiotaomicron (strain ATCC 29148 / DSM 2079 / JCM 5827 / CCUG 10774 / NCTC 10582 / VPI-5482 / E50).